The sequence spans 680 residues: Enzymatic polyprotein (680 aa).

Residues 41 to 131 (LHCFVDTGAS…LYEPFIQFTD (91 aa)) are protease. Asp46 is a catalytic residue. Residues 273–453 (LKVIKPSKSP…KKINFLGLEI (181 aa)) enclose the Reverse transcriptase domain.

It belongs to the caulimoviridae enzymatic polyprotein family.

The catalysed reaction is DNA(n) + a 2'-deoxyribonucleoside 5'-triphosphate = DNA(n+1) + diphosphate. In terms of biological role, encodes for at least two polypeptides: protease (PR) and reverse transcriptase (RT). The protease processes the polyprotein in cis. Reverse transcriptase is multifunctional enzyme that converts the viral RNA genome into dsDNA in viral cytoplasmic capsids. This enzyme displays a DNA polymerase activity that can copy either DNA or RNA templates, and a ribonuclease H (RNase H) activity that cleaves the RNA strand of RNA-DNA heteroduplexes in a partially processive 3'- to 5'-endonucleasic mode. Neo-synthesized pregenomic RNA (pgRNA) are encapsidated, and reverse-transcribed inside the nucleocapsid. Partial (+)DNA is synthesized from the (-)DNA template and generates the relaxed circular DNA (RC-DNA) genome. After budding and infection, the RC-DNA migrates in the nucleus, and is converted into a plasmid-like covalently closed circular DNA (cccDNA). This chain is Enzymatic polyprotein, found in Cauliflower mosaic virus (strain NY8153) (CaMV).